Reading from the N-terminus, the 76-residue chain is Sec-independent protein translocase protein TatA (76 aa).

Residues 1-21 form a helical membrane-spanning segment; that stretch reads MGGISIWQLLIIALIVVLLFG. The segment at 43–76 is disordered; the sequence is MSSEDEKKAIEDTSAEKTAQTEEKKTESKDKEQA. Over residues 46–76 the composition is skewed to basic and acidic residues; it reads EDEKKAIEDTSAEKTAQTEEKKTESKDKEQA.

It belongs to the TatA/E family. In terms of assembly, the Tat system comprises two distinct complexes: a TatABC complex, containing multiple copies of TatA, TatB and TatC subunits, and a separate TatA complex, containing only TatA subunits. Substrates initially bind to the TatABC complex, which probably triggers association of the separate TatA complex to form the active translocon.

The protein localises to the cell inner membrane. Part of the twin-arginine translocation (Tat) system that transports large folded proteins containing a characteristic twin-arginine motif in their signal peptide across membranes. TatA could form the protein-conducting channel of the Tat system. The sequence is that of Sec-independent protein translocase protein TatA from Shewanella loihica (strain ATCC BAA-1088 / PV-4).